A 288-amino-acid chain; its full sequence is Carbon monoxide dehydrogenase medium chain (288 aa).

In terms of domain architecture, FAD-binding PCMH-type spans methionine 1–threonine 177. Residues alanine 32 to serine 36 and threonine 111 to asparagine 115 contribute to the FAD site.

Dimer of heterotrimers. Each heterotrimer consists of a large, a medium and a small subunit. FAD serves as cofactor.

The catalysed reaction is CO + a quinone + H2O = a quinol + CO2. Catalyzes the oxidation of carbon monoxide to carbon dioxide. In Afipia carboxidovorans (strain ATCC 49405 / DSM 1227 / KCTC 32145 / OM5) (Oligotropha carboxidovorans), this protein is Carbon monoxide dehydrogenase medium chain (coxM).